A 907-amino-acid polypeptide reads, in one-letter code: Catenin alpha-1 (907 aa).

The residue at position 2 (Thr-2) is an N-acetylthreonine. The tract at residues 2–228 (TAVHAGNINF…PILYTASQAC (227 aa)) is involved in homodimerization. Lys-57 is covalently cross-linked (Glycyl lysine isopeptide (Lys-Gly) (interchain with G-Cter in SUMO2)). Positions 97 to 148 (VRKQGDLMKSAAGEFADDPCSSVKRGNMVRAARALLSAVTRLLILADMADVY) are interaction with JUP and CTNNB1. Phosphoserine is present on residues Ser-264, Ser-268, Ser-296, and Ser-298. The segment at 326–395 (TRDDRRERIV…AVMDHVSDSF (70 aa)) is interaction with alpha-actinin. Thr-635 carries the phosphothreonine modification. Ser-642 is modified (phosphoserine). Thr-646 carries the phosphothreonine modification. Ser-653 and Ser-656 each carry phosphoserine. Position 659 is a phosphothreonine (Thr-659). Residue Lys-798 forms a Glycyl lysine isopeptide (Lys-Gly) (interchain with G-Cter in SUMO2) linkage. Ser-852 is modified (phosphoserine). Residues 865–881 (PEKKPLVKREKQDETQT) are compositionally biased toward basic and acidic residues. Residues 865–895 (PEKKPLVKREKQDETQTKIKRASQKKHVNPV) are disordered. The span at 882–892 (KIKRASQKKHV) shows a compositional bias: basic residues.

The protein belongs to the vinculin/alpha-catenin family. Monomer and homodimer; the monomer preferentially binds to CTNNB1 and the homodimer to actin. Component of an cadherin:catenin adhesion complex composed of at least of CDH26, beta-catenin/CTNNB1, alpha-catenin/CTNNA1 and p120 catenin/CTNND1. Possible component of an E-cadherin/ catenin adhesion complex together with E-cadherin/CDH1 and beta-catenin/CTNNB1 or gamma-catenin/JUP; the complex is located to adherens junctions. The stable association of CTNNA1 is controversial as CTNNA1 was shown not to bind to F-actin when assembled in the complex. Alternatively, the CTNNA1-containing complex may be linked to F-actin by other proteins such as LIMA1. Binds AFDN and F-actin. Interacts with ARHGAP21. Interacts with AJUBA. Interacts with LIMA1. Interacts with vinculin/VCL. Interacts with TJP2/ZO2 (via N-terminus). Interacts with TJP1/ZO1 (via N-terminus). Post-translationally, sumoylated. In terms of processing, phosphorylation seems to contribute to the strength of cell-cell adhesion rather than to the basic capacity for cell-cell adhesion.

The protein resides in the cytoplasm. It localises to the cytoskeleton. The protein localises to the cell junction. Its subcellular location is the adherens junction. It is found in the cell membrane. The protein resides in the nucleus. Functionally, associates with the cytoplasmic domain of a variety of cadherins. The association of catenins to cadherins produces a complex which is linked to the actin filament network, and which seems to be of primary importance for cadherins cell-adhesion properties. Can associate with both E- and N-cadherins. Originally believed to be a stable component of E-cadherin/catenin adhesion complexes and to mediate the linkage of cadherins to the actin cytoskeleton at adherens junctions. In contrast, cortical actin was found to be much more dynamic than E-cadherin/catenin complexes and CTNNA1 was shown not to bind to F-actin when assembled in the complex suggesting a different linkage between actin and adherens junctions components. The homodimeric form may regulate actin filament assembly and inhibit actin branching by competing with the Arp2/3 complex for binding to actin filaments. Involved in the regulation of WWTR1/TAZ, YAP1 and TGFB1-dependent SMAD2 and SMAD3 nuclear accumulation. May play a crucial role in cell differentiation. In Oryctolagus cuniculus (Rabbit), this protein is Catenin alpha-1.